A 491-amino-acid polypeptide reads, in one-letter code: Rab5 GDP/GTP exchange factor (491 aa).

The interval 1–74 (MSLKSERRGI…EEEAFASSQS (74 aa)) is interaction with ubiquitinated proteins. The A20-type zinc finger occupies 13-47 (DQSDLLCKKGCGYYGNPAWQGFCSKCWREEYHKAR). 4 residues coordinate Zn(2+): C19, C23, C35, and C38. Positions 66–85 (EEAFASSQSSQGAQSLTFSK) are disordered. The segment covering 69 to 84 (FASSQSSQGAQSLTFS) has biased composition (low complexity). Phosphoserine is present on residues S124 and S132. Residues K151 and K170 each carry the N6-acetyllysine modification. One can recognise a VPS9 domain in the interval 232–375 (EKKDLAIQKR…IEKLDAQSLN (144 aa)). S373, S377, S390, and S400 each carry phosphoserine. The interval 462 to 491 (PPNQPLAAIDSENVENDKLPPPLQPQVYAG) is disordered.

Interacts with RGS14; the interaction is GTP-dependent. Heterodimer with RABEP1. The heterodimer binds RAB4A and RAB5A that have been activated by GTP-binding. Interacts with RAB21, and with 100-fold lower affinity also with RAB22. Binds TSC2, GGA1, GGA2, GGA3, AP1G1 and AP1G2. Interacts with ubiquitinated EGFR. Post-translationally, monoubiquitinated.

The protein resides in the cytoplasm. Its subcellular location is the early endosome. The protein localises to the recycling endosome. Functionally, rab effector protein acting as linker between gamma-adaptin, RAB4A or RAB5A. Involved in endocytic membrane fusion and membrane trafficking of recycling endosomes. Stimulates nucleotide exchange on RAB5A. Can act as a ubiquitin ligase. This Homo sapiens (Human) protein is Rab5 GDP/GTP exchange factor (RABGEF1).